The chain runs to 268 residues: Phosphate import ATP-binding protein PstB 2 (268 aa).

One can recognise an ABC transporter domain in the interval 22–263 (MALTGVNFYY…PKVKRTEDYI (242 aa)). Residue 54–61 (GPSGCGKS) participates in ATP binding.

Belongs to the ABC transporter superfamily. Phosphate importer (TC 3.A.1.7) family. As to quaternary structure, the complex is composed of two ATP-binding proteins (PstB), two transmembrane proteins (PstC and PstA) and a solute-binding protein (PstS).

It is found in the cell inner membrane. The catalysed reaction is phosphate(out) + ATP + H2O = ADP + 2 phosphate(in) + H(+). In terms of biological role, part of the ABC transporter complex PstSACB involved in phosphate import. Responsible for energy coupling to the transport system. This Rhizobium johnstonii (strain DSM 114642 / LMG 32736 / 3841) (Rhizobium leguminosarum bv. viciae) protein is Phosphate import ATP-binding protein PstB 2.